Reading from the N-terminus, the 94-residue chain is Co-chaperonin GroES (94 aa).

This sequence belongs to the GroES chaperonin family. As to quaternary structure, heptamer of 7 subunits arranged in a ring. Interacts with the chaperonin GroEL.

The protein localises to the cytoplasm. Together with the chaperonin GroEL, plays an essential role in assisting protein folding. The GroEL-GroES system forms a nano-cage that allows encapsulation of the non-native substrate proteins and provides a physical environment optimized to promote and accelerate protein folding. GroES binds to the apical surface of the GroEL ring, thereby capping the opening of the GroEL channel. This Clostridioides difficile (strain 630) (Peptoclostridium difficile) protein is Co-chaperonin GroES.